Consider the following 1109-residue polypeptide: Carbamoyl phosphate synthase large chain (1109 aa).

A carboxyphosphate synthetic domain region spans residues 1–402 (MPRRTDLTSV…ALQKAMRSID (402 aa)). ATP is bound by residues Arg-129, Arg-169, Gly-175, Gly-176, Glu-208, Ile-210, Glu-215, Gly-241, Val-242, His-243, Gln-285, and Glu-299. Positions 133–328 (KGVVERCGAE…IAKIAARLAV (196 aa)) constitute an ATP-grasp 1 domain. Positions 285, 299, and 301 each coordinate Mg(2+). Mn(2+) is bound by residues Gln-285, Glu-299, and Asn-301. An oligomerization domain region spans residues 403–548 (KAGSTFHWRG…YHYSSYDAET (146 aa)). Residues 549–956 (EVQPRDRPAV…AFAKSQAAAY (408 aa)) are carbamoyl phosphate synthetic domain. An ATP-grasp 2 domain is found at 678-876 (GEVLVAAGLP…LAKAASLLMA (199 aa)). The ATP site is built by Arg-714, Arg-760, Leu-762, Glu-767, Gly-792, Ile-793, His-794, Ser-795, Gln-835, and Glu-847. Positions 835, 847, and 849 each coordinate Mg(2+). Residues Gln-835, Glu-847, and Asn-849 each coordinate Mn(2+). An MGS-like domain is found at 957–1102 (GGLPTSGRVF…QEHDAARAAR (146 aa)). The interval 957 to 1109 (GGLPTSGRVF…AARETEGVHA (153 aa)) is allosteric domain.

It belongs to the CarB family. Composed of two chains; the small (or glutamine) chain promotes the hydrolysis of glutamine to ammonia, which is used by the large (or ammonia) chain to synthesize carbamoyl phosphate. Tetramer of heterodimers (alpha,beta)4. Requires Mg(2+) as cofactor. Mn(2+) is required as a cofactor.

It carries out the reaction hydrogencarbonate + L-glutamine + 2 ATP + H2O = carbamoyl phosphate + L-glutamate + 2 ADP + phosphate + 2 H(+). It catalyses the reaction hydrogencarbonate + NH4(+) + 2 ATP = carbamoyl phosphate + 2 ADP + phosphate + 2 H(+). Its pathway is amino-acid biosynthesis; L-arginine biosynthesis; carbamoyl phosphate from bicarbonate: step 1/1. It functions in the pathway pyrimidine metabolism; UMP biosynthesis via de novo pathway; (S)-dihydroorotate from bicarbonate: step 1/3. In terms of biological role, large subunit of the glutamine-dependent carbamoyl phosphate synthetase (CPSase). CPSase catalyzes the formation of carbamoyl phosphate from the ammonia moiety of glutamine, carbonate, and phosphate donated by ATP, constituting the first step of 2 biosynthetic pathways, one leading to arginine and/or urea and the other to pyrimidine nucleotides. The large subunit (synthetase) binds the substrates ammonia (free or transferred from glutamine from the small subunit), hydrogencarbonate and ATP and carries out an ATP-coupled ligase reaction, activating hydrogencarbonate by forming carboxy phosphate which reacts with ammonia to form carbamoyl phosphate. This Beutenbergia cavernae (strain ATCC BAA-8 / DSM 12333 / CCUG 43141 / JCM 11478 / NBRC 16432 / NCIMB 13614 / HKI 0122) protein is Carbamoyl phosphate synthase large chain.